Reading from the N-terminus, the 123-residue chain is Small ribosomal subunit protein uS12c (123 aa).

Positions 1-20 (MPTIQQLIRNTRQPTQNRTK) are enriched in polar residues. The tract at residues 1 to 27 (MPTIQQLIRNTRQPTQNRTKSPALKAC) is disordered.

It belongs to the universal ribosomal protein uS12 family. As to quaternary structure, part of the 30S ribosomal subunit.

The protein resides in the plastid. Its subcellular location is the chloroplast. Functionally, with S4 and S5 plays an important role in translational accuracy. Located at the interface of the 30S and 50S subunits. In Zygnema circumcarinatum (Green alga), this protein is Small ribosomal subunit protein uS12c (rps12).